Consider the following 428-residue polypeptide: Chaperone SurA (428 aa).

Residues 1-19 form the signal peptide; that stretch reads MNIWKTLLLGMLVTGSAVS. PpiC domains follow at residues 170 to 268 and 277 to 377; these read SVEY…KIED and VTEV…EVLD.

The protein localises to the periplasm. The catalysed reaction is [protein]-peptidylproline (omega=180) = [protein]-peptidylproline (omega=0). In terms of biological role, chaperone involved in the correct folding and assembly of outer membrane proteins. Recognizes specific patterns of aromatic residues and the orientation of their side chains, which are found more frequently in integral outer membrane proteins. May act in both early periplasmic and late outer membrane-associated steps of protein maturation. This is Chaperone SurA from Vibrio vulnificus (strain CMCP6).